The sequence spans 225 residues: Ribosome maturation factor RimP (225 aa).

The protein belongs to the RimP family.

The protein localises to the cytoplasm. Functionally, required for maturation of 30S ribosomal subunits. This is Ribosome maturation factor RimP from Rhodospirillum rubrum (strain ATCC 11170 / ATH 1.1.1 / DSM 467 / LMG 4362 / NCIMB 8255 / S1).